Reading from the N-terminus, the 159-residue chain is CASP-like protein 1C1 (159 aa).

At 1–6 the chain is on the cytoplasmic side; the sequence is MAKIKR. Residues 7-27 form a helical membrane-spanning segment; it reads IITTLVRLLVLGAALSATIVM. The Extracellular portion of the chain corresponds to 28 to 50; sequence VTSHDSAEVLNLSFDAKYTNARA. A glycan (N-linked (GlcNAc...) asparagine) is linked at N38. A helical transmembrane segment spans residues 51-73; it reads FVYFAITNAIASGYSFIALFLSF. At 74 to 86 the chain is on the cytoplasmic side; that stretch reads STPLWHLVFLLDV. The helical transmembrane segment at 87 to 107 threads the bilayer; that stretch reads FMTLLLTSSISVALAIADVGK. At 108–130 the chain is on the extracellular side; it reads KGNSHAGWLPVCGQVPEFCDHVT. Residues 131 to 151 form a helical membrane-spanning segment; it reads GALIAGFSAAVLYLVLLLFSI. Topologically, residues 152-159 are cytoplasmic; the sequence is HAVLNPKP.

It belongs to the Casparian strip membrane proteins (CASP) family. As to quaternary structure, homodimer and heterodimers.

The protein resides in the cell membrane. The polypeptide is CASP-like protein 1C1 (Vitis vinifera (Grape)).